The sequence spans 123 residues: SPbeta prophage-derived uncharacterized protein YorE (123 aa).

This Bacillus subtilis (strain 168) protein is SPbeta prophage-derived uncharacterized protein YorE (yorE).